The following is a 641-amino-acid chain: Chaperone protein DnaK (641 aa).

Position 201 is a phosphothreonine; by autocatalysis (threonine 201). Residues 604–622 (ASAEQGGAAPGADAGNAGK) are compositionally biased toward low complexity. The disordered stretch occupies residues 604-625 (ASAEQGGAAPGADAGNAGKAQD).

This sequence belongs to the heat shock protein 70 family.

Functionally, acts as a chaperone. This Stenotrophomonas maltophilia (strain R551-3) protein is Chaperone protein DnaK.